The primary structure comprises 297 residues: MNQKDTRKETLEFNKLQKRLRRNVGNAITDYNMIEEGDVVMACISGGKDSFAMLDILLNLQKAAPIKFEVVAVNLDQKQPGFPEHILPEYFETLNIPYYIVDKDTYSVVKEKVPEGKTTCGLCSRLRRGTLYSFAEKIGATKLALGHHMDDIVETMFLNMFHGSRLKAMPPKLRSDDGRNVVIRPLTYCREKDLIKYAEHKDFPIIPCNLCGSQENLQRQAIKAMLIDWDKKTPGRVEAIFKSIQNVSPSQLADRELFDFVNLPLDRDGSREEYEFSEAVVSSTNIDESLFIDVTNI.

The PP-loop motif signature appears at 45-50 (SGGKDS). 3 residues coordinate [4Fe-4S] cluster: cysteine 120, cysteine 123, and cysteine 211.

This sequence belongs to the TtcA family. Homodimer. The cofactor is Mg(2+). [4Fe-4S] cluster is required as a cofactor.

The protein localises to the cytoplasm. It carries out the reaction cytidine(32) in tRNA + S-sulfanyl-L-cysteinyl-[cysteine desulfurase] + AH2 + ATP = 2-thiocytidine(32) in tRNA + L-cysteinyl-[cysteine desulfurase] + A + AMP + diphosphate + H(+). The protein operates within tRNA modification. Its function is as follows. Catalyzes the ATP-dependent 2-thiolation of cytidine in position 32 of tRNA, to form 2-thiocytidine (s(2)C32). The sulfur atoms are provided by the cysteine/cysteine desulfurase (IscS) system. The protein is tRNA-cytidine(32) 2-sulfurtransferase of Vibrio parahaemolyticus serotype O3:K6 (strain RIMD 2210633).